The sequence spans 203 residues: Holliday junction branch migration complex subunit RuvA (203 aa).

The segment at 1-64 is domain I; sequence MIGRLRGIIL…EDAQLLYGFN (64 aa). The domain II stretch occupies residues 65 to 142; the sequence is NKQERTLFKE…KGLHGDLFTP (78 aa). The segment at 143-154 is flexible linker; the sequence is AVDLVLTSPASP. A domain III region spans residues 155-203; that stretch reads TSEDAEQEAVAALVALGYKPQEASRMVSKIARPDASSETLIRDALRAAL.

This sequence belongs to the RuvA family. As to quaternary structure, homotetramer. Forms an RuvA(8)-RuvB(12)-Holliday junction (HJ) complex. HJ DNA is sandwiched between 2 RuvA tetramers; dsDNA enters through RuvA and exits via RuvB. An RuvB hexamer assembles on each DNA strand where it exits the tetramer. Each RuvB hexamer is contacted by two RuvA subunits (via domain III) on 2 adjacent RuvB subunits; this complex drives branch migration. In the full resolvosome a probable DNA-RuvA(4)-RuvB(12)-RuvC(2) complex forms which resolves the HJ.

It localises to the cytoplasm. Functionally, the RuvA-RuvB-RuvC complex processes Holliday junction (HJ) DNA during genetic recombination and DNA repair, while the RuvA-RuvB complex plays an important role in the rescue of blocked DNA replication forks via replication fork reversal (RFR). RuvA specifically binds to HJ cruciform DNA, conferring on it an open structure. The RuvB hexamer acts as an ATP-dependent pump, pulling dsDNA into and through the RuvAB complex. HJ branch migration allows RuvC to scan DNA until it finds its consensus sequence, where it cleaves and resolves the cruciform DNA. This Salmonella agona (strain SL483) protein is Holliday junction branch migration complex subunit RuvA.